The sequence spans 901 residues: Core protein VP3 (901 aa).

The protein belongs to the orbivirus VP3 family.

It is found in the virion. Functionally, the VP3 protein is one of the five proteins (with VP1, VP4, VP6 and VP7) which form the inner capsid of the virus. The chain is Core protein VP3 (Segment-3) from Bluetongue virus 1 (isolate South Africa) (BTV 1).